The sequence spans 161 residues: Large ribosomal subunit protein bL17 (161 aa).

The disordered stretch occupies residues 126–161 (KVAKKATRTRRSKKTTEAAPAAEVPATEEPKAESAE). The span at 129-138 (KKATRTRRSK) shows a compositional bias: basic residues. Positions 142 to 152 (EAAPAAEVPAT) are enriched in low complexity.

Belongs to the bacterial ribosomal protein bL17 family. As to quaternary structure, part of the 50S ribosomal subunit. Contacts protein L32.

The chain is Large ribosomal subunit protein bL17 from Bacteroides fragilis (strain ATCC 25285 / DSM 2151 / CCUG 4856 / JCM 11019 / LMG 10263 / NCTC 9343 / Onslow / VPI 2553 / EN-2).